The chain runs to 206 residues: Large ribosomal subunit protein uL4 (206 aa).

The protein belongs to the universal ribosomal protein uL4 family. As to quaternary structure, part of the 50S ribosomal subunit.

Its function is as follows. One of the primary rRNA binding proteins, this protein initially binds near the 5'-end of the 23S rRNA. It is important during the early stages of 50S assembly. It makes multiple contacts with different domains of the 23S rRNA in the assembled 50S subunit and ribosome. Functionally, forms part of the polypeptide exit tunnel. This is Large ribosomal subunit protein uL4 from Methylobacterium radiotolerans (strain ATCC 27329 / DSM 1819 / JCM 2831 / NBRC 15690 / NCIMB 10815 / 0-1).